The primary structure comprises 394 residues: Elongation factor Tu (394 aa).

The 195-residue stretch at 10 to 204 (KPHVNVGTIG…ALDNYIPEPE (195 aa)) folds into the tr-type G domain. Residues 19–26 (GHVDHGKT) are G1. 19-26 (GHVDHGKT) is a binding site for GTP. Thr-26 is a binding site for Mg(2+). The G2 stretch occupies residues 60–64 (GITIS). Positions 81–84 (DCPG) are G3. Residues 81-85 (DCPGH) and 136-139 (NKCD) each bind GTP. A G4 region spans residues 136–139 (NKCD). Positions 174–176 (SAL) are G5.

This sequence belongs to the TRAFAC class translation factor GTPase superfamily. Classic translation factor GTPase family. EF-Tu/EF-1A subfamily. In terms of assembly, monomer.

It is found in the cytoplasm. The enzyme catalyses GTP + H2O = GDP + phosphate + H(+). GTP hydrolase that promotes the GTP-dependent binding of aminoacyl-tRNA to the A-site of ribosomes during protein biosynthesis. In Idiomarina loihiensis (strain ATCC BAA-735 / DSM 15497 / L2-TR), this protein is Elongation factor Tu.